Here is a 409-residue protein sequence, read N- to C-terminus: MDYSQFFNSALDRLHTERRYRVFADLERMAGRFPHAIWHSPKGKRDVVIWCSNDYLGMGQHPKVVGAMVETATRVGTGAGGTRNIAGTHHPLVQLEAELADLHGKEAALLFTSGYVSNQTGIATIAKLIPNCLILSDELNHNSMIEGIRQSGCERQVFRHNDLADLEALLKAAGANRPKLIACESLYSMDGDVAPLAKICDLAEKYNAMTYVDEVHAVGMYGPRGGGIAERDGVMHRIDILEGTLAKAFGCLGGYIAANGQIIDAVRSYAPGFIFTTALPPAICSAATAAIKHLKTSSWERERHQDRAARVKAILNAAGLPVMSSDTHIVPLFIGDAEKCKQASDLLLEEHGIYIQPINYPTVAKGSERLRITPSPYHDDGLIDQLAEALLQVWDRLGLPLKQKSLAAE.

Residues R21 and S136 each contribute to the substrate site. Positions 188, 216, and 244 each coordinate pyridoxal 5'-phosphate. Residue K247 is part of the active site. N6-(pyridoxal phosphate)lysine is present on K247. Pyridoxal 5'-phosphate contacts are provided by T276 and T277. Residue T362 coordinates substrate.

Belongs to the class-II pyridoxal-phosphate-dependent aminotransferase family. As to quaternary structure, homodimer. The cofactor is pyridoxal 5'-phosphate.

The enzyme catalyses succinyl-CoA + glycine + H(+) = 5-aminolevulinate + CO2 + CoA. Its pathway is porphyrin-containing compound metabolism; protoporphyrin-IX biosynthesis; 5-aminolevulinate from glycine: step 1/1. The protein is 5-aminolevulinate synthase (hemA) of Bradyrhizobium diazoefficiens (strain JCM 10833 / BCRC 13528 / IAM 13628 / NBRC 14792 / USDA 110).